We begin with the raw amino-acid sequence, 591 residues long: Aspartate--tRNA(Asp/Asn) ligase (591 aa).

Residue Glu175 participates in L-aspartate binding. The interval 199–202 (QQFK) is aspartate. 2 residues coordinate L-aspartate: Arg221 and His453. 221–223 (RDE) contributes to the ATP binding site. Glu486 lines the ATP pocket. Arg493 is an L-aspartate binding site. 538 to 541 (GIDR) is a binding site for ATP.

The protein belongs to the class-II aminoacyl-tRNA synthetase family. Type 1 subfamily. In terms of assembly, homodimer.

Its subcellular location is the cytoplasm. The enzyme catalyses tRNA(Asx) + L-aspartate + ATP = L-aspartyl-tRNA(Asx) + AMP + diphosphate. Its function is as follows. Aspartyl-tRNA synthetase with relaxed tRNA specificity since it is able to aspartylate not only its cognate tRNA(Asp) but also tRNA(Asn). Reaction proceeds in two steps: L-aspartate is first activated by ATP to form Asp-AMP and then transferred to the acceptor end of tRNA(Asp/Asn). This is Aspartate--tRNA(Asp/Asn) ligase from Roseobacter denitrificans (strain ATCC 33942 / OCh 114) (Erythrobacter sp. (strain OCh 114)).